The primary structure comprises 301 residues: MGGEALTLPKDLLDFSGYGPKELQALLDLAERLKRERYRGEDLKGKVLALLFEKPSLRTRTTLEVAMVHLGGHAVYLDQKQVGIGEREPVRDVAKNLERFVEGIAARVFRHETVEALARHAKVPVVNALSDRAHPLQALADLLTLKEVFGGLAGLEVAWVGDGNNVLNSLLEVAPLAGLKVRVATPKGYEPDPGLLKRANAFFTHDPKEAALGAHALYTDVWTSMGQEAERAKRLRDFQGFQVNGELLKLLRPEGVFLHCLPAHYGEETTEEAVHGPRSRVFDQAENRLHTAKAVLLTLLK.

Residues Arg107 and 134-137 each bind carbamoyl phosphate; that span reads HPLQ. L-ornithine contacts are provided by residues Asn165, Asp220, and 224–225; that span reads SM. Carbamoyl phosphate contacts are provided by residues 260–261 and Arg288; that span reads CL.

Belongs to the aspartate/ornithine carbamoyltransferase superfamily. OTCase family. As to quaternary structure, homotrimer.

The protein resides in the cytoplasm. It catalyses the reaction carbamoyl phosphate + L-ornithine = L-citrulline + phosphate + H(+). It participates in amino-acid biosynthesis; L-arginine biosynthesis; L-arginine from L-ornithine and carbamoyl phosphate: step 1/3. Its activity is regulated as follows. Inhibited by delta-N-phosphonoacetyl-L-ornithine. Its function is as follows. Reversibly catalyzes the transfer of the carbamoyl group from carbamoyl phosphate (CP) to the N(epsilon) atom of ornithine (ORN) to produce L-citrulline, which is a substrate for argininosuccinate synthetase, the enzyme involved in the final step in arginine biosynthesis. In Thermus thermophilus (strain ATCC BAA-163 / DSM 7039 / HB27), this protein is Ornithine carbamoyltransferase.